The sequence spans 283 residues: Protease HtpX (283 aa).

2 consecutive transmembrane segments (helical) span residues 4 to 24 (ILLFLATNMAVMLVLGIILNV) and 33 to 53 (GGILIMALLFGFAGSLISLFL). His139 lines the Zn(2+) pocket. The active site involves Glu140. His143 contributes to the Zn(2+) binding site. 2 helical membrane-spanning segments follow: residues 147-167 (GDMVTMALLQGVLNTFVIFLS) and 190-210 (IYFLVSMVLEMLFGVLASIIA). Glu218 contacts Zn(2+).

This sequence belongs to the peptidase M48B family. The cofactor is Zn(2+).

Its subcellular location is the cell inner membrane. The chain is Protease HtpX from Haemophilus influenzae (strain 86-028NP).